The sequence spans 185 residues: Homeobox expressed in ES cells 1 (185 aa).

Residues 32 to 69 (KKDCTTSVRPHRPWTDTCGDSEKGGNPPLHAPDLPSET) form a disordered region. The segment at residues 108–167 (GRRPRTAFTQNQVEVLENVFRVNCYPGIDIREDLAQKLNLEEDRIQIWFQNRRAKMKRSR) is a DNA-binding region (homeobox).

The protein belongs to the ANF homeobox family. Can form heterodimers with PROP1 in binding to DNA Interacts with TLE1. High levels found in the embryonic liver, lower level expression seen in the viscera, amnion and yolk sac.

The protein localises to the nucleus. Functionally, required for the normal development of the forebrain, eyes and other anterior structures such as the olfactory placodes and pituitary gland. Possible transcriptional repressor. Binds to the palindromic PIII sequence, 5'-AGCTTGAGTCTAATTGAATTAACTGTAC-3'. HESX1 and PROP1 bind as heterodimers on this palindromic site, and, in vitro, HESX1 can antagonize PROP1 activation. This Mus musculus (Mouse) protein is Homeobox expressed in ES cells 1 (Hesx1).